We begin with the raw amino-acid sequence, 76 residues long: Putative Fe(2+) transport protein A (76 aa).

This sequence belongs to the FeoA family.

In terms of biological role, might be involved in Fe(2+) ion uptake. The polypeptide is Putative Fe(2+) transport protein A (Helicobacter pylori (strain ATCC 700392 / 26695) (Campylobacter pylori)).